Here is a 467-residue protein sequence, read N- to C-terminus: Glutamyl-tRNA(Gln) amidotransferase subunit A (467 aa).

Active-site charge relay system residues include Lys57 and Ser132. Ser156 serves as the catalytic Acyl-ester intermediate.

Belongs to the amidase family. GatA subfamily. As to quaternary structure, heterotrimer of A, B and C subunits.

The enzyme catalyses L-glutamyl-tRNA(Gln) + L-glutamine + ATP + H2O = L-glutaminyl-tRNA(Gln) + L-glutamate + ADP + phosphate + H(+). Allows the formation of correctly charged Gln-tRNA(Gln) through the transamidation of misacylated Glu-tRNA(Gln) in organisms which lack glutaminyl-tRNA synthetase. The reaction takes place in the presence of glutamine and ATP through an activated gamma-phospho-Glu-tRNA(Gln). The protein is Glutamyl-tRNA(Gln) amidotransferase subunit A of Pseudothermotoga lettingae (strain ATCC BAA-301 / DSM 14385 / NBRC 107922 / TMO) (Thermotoga lettingae).